We begin with the raw amino-acid sequence, 728 residues long: U-box domain-containing protein 4 (728 aa).

In terms of domain architecture, U-box spans 296–370 (SVPKEFSCPI…SQWCGVYGLQ (75 aa)). ARM repeat units follow at residues 441-483 (GAIP…EQEG) and 526-568 (GAVE…ESCA).

It catalyses the reaction S-ubiquitinyl-[E2 ubiquitin-conjugating enzyme]-L-cysteine + [acceptor protein]-L-lysine = [E2 ubiquitin-conjugating enzyme]-L-cysteine + N(6)-ubiquitinyl-[acceptor protein]-L-lysine.. The protein operates within protein modification; protein ubiquitination. Possesses E3 ubiquitin-protein ligase in vitro. In Oryza sativa subsp. japonica (Rice), this protein is U-box domain-containing protein 4 (PUB4).